We begin with the raw amino-acid sequence, 327 residues long: Biotin synthase (327 aa).

Residues 52–279 (NAIQRSTLLS…TSWVRLSAGR (228 aa)) form the Radical SAM core domain. Residues C67, C71, and C74 each coordinate [4Fe-4S] cluster. Positions 111, 142, 202, and 274 each coordinate [2Fe-2S] cluster.

It belongs to the radical SAM superfamily. Biotin synthase family. As to quaternary structure, homodimer. [4Fe-4S] cluster serves as cofactor. It depends on [2Fe-2S] cluster as a cofactor.

The catalysed reaction is (4R,5S)-dethiobiotin + (sulfur carrier)-SH + 2 reduced [2Fe-2S]-[ferredoxin] + 2 S-adenosyl-L-methionine = (sulfur carrier)-H + biotin + 2 5'-deoxyadenosine + 2 L-methionine + 2 oxidized [2Fe-2S]-[ferredoxin]. It functions in the pathway cofactor biosynthesis; biotin biosynthesis; biotin from 7,8-diaminononanoate: step 2/2. In terms of biological role, catalyzes the conversion of dethiobiotin (DTB) to biotin by the insertion of a sulfur atom into dethiobiotin via a radical-based mechanism. In Dechloromonas aromatica (strain RCB), this protein is Biotin synthase.